The sequence spans 331 residues: (E)-beta farnesene synthase MBR_03882 (331 aa).

The protein belongs to the trichodiene synthase family.

The catalysed reaction is (2E,6E)-farnesyl diphosphate = (E)-beta-farnesene + diphosphate. Its function is as follows. Terpene synthase that catalyzes the conversion of (2E,6E)-farnesyl diphosphate (FPP) into the volatile sesquiterpene (E)-beta-farnesene. This chain is (E)-beta farnesene synthase MBR_03882, found in Metarhizium brunneum (strain ARSEF 3297).